The chain runs to 352 residues: Threonine synthase (352 aa).

K59 carries the N6-(pyridoxal phosphate)lysine modification. Residues N85, 185-189 (GNAGN), and T314 contribute to the pyridoxal 5'-phosphate site.

Belongs to the threonine synthase family. Requires pyridoxal 5'-phosphate as cofactor.

It catalyses the reaction O-phospho-L-homoserine + H2O = L-threonine + phosphate. The protein operates within amino-acid biosynthesis; L-threonine biosynthesis; L-threonine from L-aspartate: step 5/5. Functionally, catalyzes the gamma-elimination of phosphate from L-phosphohomoserine and the beta-addition of water to produce L-threonine. The chain is Threonine synthase (thrC) from Bacillus sp. (strain ULM1).